The sequence spans 113 residues: Large ribosomal subunit protein eL36z (113 aa).

Residues 78-88 show a composition bias toward basic residues; sequence RKLGTHKRAKR. Residues 78–113 form a disordered region; it reads RKLGTHKRAKRKREEMSSVLRKMRSLGGAAAAEKKM.

This sequence belongs to the eukaryotic ribosomal protein eL36 family.

The sequence is that of Large ribosomal subunit protein eL36z (RPL36A) from Arabidopsis thaliana (Mouse-ear cress).